The chain runs to 557 residues: Probable phenylalanine--tRNA ligase beta subunit (557 aa).

The B5 domain occupies 276 to 352; that stretch reads MHNRSYVMGL…IAHGFNNFRR (77 aa). Residues aspartate 330, aspartate 336, glutamate 339, and aspartate 340 each contribute to the Mg(2+) site.

The protein belongs to the phenylalanyl-tRNA synthetase beta subunit family. Type 2 subfamily. Tetramer of two alpha and two beta subunits. The cofactor is Mg(2+).

Its subcellular location is the cytoplasm. The enzyme catalyses tRNA(Phe) + L-phenylalanine + ATP = L-phenylalanyl-tRNA(Phe) + AMP + diphosphate + H(+). In Encephalitozoon cuniculi (strain GB-M1) (Microsporidian parasite), this protein is Probable phenylalanine--tRNA ligase beta subunit.